We begin with the raw amino-acid sequence, 300 residues long: Neutral protease NprE (300 aa).

D139 provides a ligand contact to Ca(2+). H143 serves as a coordination point for Zn(2+). Residue E144 is part of the active site. H147 and E167 together coordinate Zn(2+). Ca(2+) contacts are provided by D178, D181, D183, and E186. The active-site Proton donor is the H228.

This sequence belongs to the peptidase M4 family. It depends on Ca(2+) as a cofactor. Zn(2+) is required as a cofactor.

The protein localises to the secreted. It catalyses the reaction Similar, but not identical, to that of thermolysin.. Functionally, extracellular zinc metalloprotease. The sequence is that of Neutral protease NprE (nprE) from Bacillus pumilus (Bacillus mesentericus).